We begin with the raw amino-acid sequence, 292 residues long: 4-hydroxy-tetrahydrodipicolinate synthase (292 aa).

A pyruvate-binding site is contributed by T45. Residue Y133 is the Proton donor/acceptor of the active site. Catalysis depends on K161, which acts as the Schiff-base intermediate with substrate. A pyruvate-binding site is contributed by I203.

The protein belongs to the DapA family. Homotetramer; dimer of dimers.

Its subcellular location is the cytoplasm. The catalysed reaction is L-aspartate 4-semialdehyde + pyruvate = (2S,4S)-4-hydroxy-2,3,4,5-tetrahydrodipicolinate + H2O + H(+). Its pathway is amino-acid biosynthesis; L-lysine biosynthesis via DAP pathway; (S)-tetrahydrodipicolinate from L-aspartate: step 3/4. Functionally, catalyzes the condensation of (S)-aspartate-beta-semialdehyde [(S)-ASA] and pyruvate to 4-hydroxy-tetrahydrodipicolinate (HTPA). The chain is 4-hydroxy-tetrahydrodipicolinate synthase from Nitrosomonas eutropha (strain DSM 101675 / C91 / Nm57).